We begin with the raw amino-acid sequence, 108 residues long: MEQFEAINVEQAYSRWKDGSAALVDIRDPQSFEAGHTPGAFHLTNASLQTFMQQNDFERPVMVMCYHGNSSRSAAQYLLHQGFDAVYSIDGGFEAWARQYPQDVETSA.

One can recognise a Rhodanese domain in the interval 17-105 (KDGSAALVDI…WARQYPQDVE (89 aa)). The active-site Cysteine persulfide intermediate is Cys-65.

It belongs to the GlpE family.

Its subcellular location is the cytoplasm. The enzyme catalyses thiosulfate + hydrogen cyanide = thiocyanate + sulfite + 2 H(+). It carries out the reaction thiosulfate + [thioredoxin]-dithiol = [thioredoxin]-disulfide + hydrogen sulfide + sulfite + 2 H(+). In terms of biological role, transferase that catalyzes the transfer of sulfur from thiosulfate to thiophilic acceptors such as cyanide or dithiols. May function in a CysM-independent thiosulfate assimilation pathway by catalyzing the conversion of thiosulfate to sulfite, which can then be used for L-cysteine biosynthesis. This Serratia proteamaculans (strain 568) protein is Thiosulfate sulfurtransferase GlpE.